The chain runs to 408 residues: DNA polymerase processivity factor (408 aa).

The short motif at 344–353 is the Nuclear localization signal element; the sequence is KKRRNLLTKR.

It belongs to the herpesviridae DNA polymerase processivity factor family. Interacts with the DNA polymerase catalytic subunit. Interacts with the origin-binding protein.

The protein resides in the host nucleus. Functionally, plays an essential role in viral DNA replication by acting as the polymerase accessory subunit. Associates with the viral polymerase to increase its processivity and forms high-affinity direct interactions with DNA. Facilitates the origin-binding protein loading onto DNA thus increasing its ability to assemble into a functional complex capable of unwinding duplex DNA. The chain is DNA polymerase processivity factor from Varicella-zoster virus (strain Oka vaccine) (HHV-3).